A 347-amino-acid chain; its full sequence is Protein phosphatase 2C homolog 1 (347 aa).

A disordered region spans residues 1-41 (MKGSHPNAGSLLEPLHKLNPFSENSTSGHRKNASDHSADGE). Residues 32 to 41 (NASDHSADGE) are compositionally biased toward basic and acidic residues. Residues 71–323 (LAGLMEDKNQ…DNITCIVVNL (253 aa)) enclose the PPM-type phosphatase domain. Residues Asp109, Gly110, Asp275, and Asp314 each contribute to the Mn(2+) site.

Belongs to the PP2C family. Monomer. It depends on Mg(2+) as a cofactor. Mn(2+) serves as cofactor.

It carries out the reaction O-phospho-L-seryl-[protein] + H2O = L-seryl-[protein] + phosphate. The catalysed reaction is O-phospho-L-threonyl-[protein] + H2O = L-threonyl-[protein] + phosphate. Serine and threonine phosphatase. Has a specialized role in the heat shock response. May be responsible for the dephosphorylation of hsp90. The chain is Protein phosphatase 2C homolog 1 (ptc1) from Schizosaccharomyces pombe (strain 972 / ATCC 24843) (Fission yeast).